Here is a 245-residue protein sequence, read N- to C-terminus: Uridylate kinase (245 aa).

16 to 19 (KLSG) contacts ATP. An involved in allosteric activation by GTP region spans residues 24–29 (GDNGFG). A UMP-binding site is contributed by Gly-59. ATP-binding residues include Gly-60 and Arg-64. UMP is bound by residues Asp-78 and 139-146 (NGAPFFTT). Residues Asn-167, Tyr-173, and Asp-176 each coordinate ATP.

It belongs to the UMP kinase family. Homohexamer.

The protein resides in the cytoplasm. The enzyme catalyses UMP + ATP = UDP + ADP. The protein operates within pyrimidine metabolism; CTP biosynthesis via de novo pathway; UDP from UMP (UMPK route): step 1/1. Its activity is regulated as follows. Allosterically activated by GTP. Inhibited by UTP. Functionally, catalyzes the reversible phosphorylation of UMP to UDP. This is Uridylate kinase from Deinococcus radiodurans (strain ATCC 13939 / DSM 20539 / JCM 16871 / CCUG 27074 / LMG 4051 / NBRC 15346 / NCIMB 9279 / VKM B-1422 / R1).